A 515-amino-acid polypeptide reads, in one-letter code: Leucine-rich repeat transmembrane neuronal protein 2 (515 aa).

The N-terminal stretch at 1–33 (MGLHFKWPLGAPMLAAIYAMSVVLKMLPALGMA) is a signal peptide. Topologically, residues 34 to 421 (CPPKCRCEKL…EPDNAIFTQR (388 aa)) are extracellular. Asparagine 57 is a glycosylation site (N-linked (GlcNAc...) asparagine). 10 LRR repeats span residues 61–83 (KGSLGLSLRHNHITALERDQFAS), 84–107 (FSQLTWLHLDHNQISTVKEDAFQG), 109–131 (YKLKELILSSNKIFYLPNTTFTQ), 132–155 (LINLQNLDLSFNQLSSLHPELFYG), 156–179 (LRKLQTLHLRSNSLRTIPVRLFWD), 181–203 (RSLEFLDLSTNRLRSLARNGFAG), 205–227 (IKLRELHLEHNQLTKINFAHFLR), 229–251 (SSLHTLFLQWNKISNLTCGMEWT), 252–275 (WSTLEKLDLTGNEIKAIDLTVFET), and 276–299 (MPNLKILLMDNNKLNSLDSKILSS). Asparagine 126 is a glycosylation site (N-linked (GlcNAc...) asparagine). N-linked (GlcNAc...) asparagine glycosylation is present at asparagine 243. Asparagine 362 is a glycosylation site (N-linked (GlcNAc...) asparagine). Residues 422-442 (VITGTMALLFSFFFIIFIVFI) form a helical membrane-spanning segment. The Cytoplasmic segment spans residues 443–515 (SRKCCPPTLR…QQLPYKECEV (73 aa)). The Involved in DLG4-binding motif lies at 512–515 (ECEV).

The protein belongs to the LRRTM family. Interacts with DLG4. Interacts with neurexin NRXN1; interaction is mediated by heparan sulfate glycan modification on neurexin. As to expression, expressed in neuronal tissues. Widely distributed in neuropil regions in discrete puncta throughout the brain (at protein level). Detected in cortex, thalamus, striatum, olfactory bulb, cerebellum and all hippocampal subfields (at protein level). More abundant in deep than in superficial layers of neocortex (at protein level).

Its subcellular location is the cell membrane. It is found in the postsynaptic cell membrane. Its function is as follows. Involved in the development and maintenance of excitatory synapses in the nervous system. Regulates surface expression of AMPA receptors and instructs the development of functional glutamate release sites. Acts as a ligand for the presynaptic receptors NRXN1-A and NRXN1-B. The chain is Leucine-rich repeat transmembrane neuronal protein 2 (Lrrtm2) from Rattus norvegicus (Rat).